Reading from the N-terminus, the 308-residue chain is Large ribosomal subunit protein mL38 (308 aa).

A mitochondrion-targeting transit peptide spans 1–17 (MKRVWPRIPTISNVCRA).

This sequence belongs to the phosphatidylethanolamine-binding protein family. Mitochondrion-specific ribosomal protein mL38 subfamily. Component of the mitochondrial large ribosomal subunit (mt-LSU). Mature yeast 74S mitochondrial ribosomes consist of a small (37S) and a large (54S) subunit. The 37S small subunit contains a 15S ribosomal RNA (15S mt-rRNA) and at least 32 different proteins. The 54S large subunit contains a 21S rRNA (21S mt-rRNA) and at least 45 different proteins.

Its subcellular location is the mitochondrion. Functionally, component of the mitochondrial ribosome (mitoribosome), a dedicated translation machinery responsible for the synthesis of mitochondrial genome-encoded proteins, including at least some of the essential transmembrane subunits of the mitochondrial respiratory chain. The mitoribosomes are attached to the mitochondrial inner membrane and translation products are cotranslationally integrated into the membrane. In Schizosaccharomyces pombe (strain 972 / ATCC 24843) (Fission yeast), this protein is Large ribosomal subunit protein mL38 (mrpl35).